Consider the following 211-residue polypeptide: Transcription antitermination protein NusB (211 aa).

It belongs to the NusB family.

Involved in transcription antitermination. Required for transcription of ribosomal RNA (rRNA) genes. Binds specifically to the boxA antiterminator sequence of the ribosomal RNA (rrn) operons. The polypeptide is Transcription antitermination protein NusB (Trichormus variabilis (strain ATCC 29413 / PCC 7937) (Anabaena variabilis)).